Reading from the N-terminus, the 606-residue chain is Probable methyltransferase PMT5 (606 aa).

The Cytoplasmic portion of the chain corresponds to 1 to 20; the sequence is MRGSWYKSVSSVFGLRPRIR. The chain crosses the membrane as a helical; Signal-anchor for type II membrane protein span at residues 21–41; the sequence is GLLFFIVGVVALVTILAPLTS. Over 42 to 606 the chain is Lumenal; sequence NSYDSSSSST…LVCQKPFIKK (565 aa). Residues Asn101 and Asn409 are each glycosylated (N-linked (GlcNAc...) asparagine).

This sequence belongs to the methyltransferase superfamily.

Its subcellular location is the endoplasmic reticulum membrane. This chain is Probable methyltransferase PMT5, found in Arabidopsis thaliana (Mouse-ear cress).